The following is a 284-amino-acid chain: Heat stress transcription factor B-1 (284 aa).

The DNA-binding element occupies 12–106 (PAPFLSKTYQ…LLTDIRRRKS (95 aa)). The disordered stretch occupies residues 118–151 (VGSPSESNSGGGDDHGSSSTSSPGSSKNPGSVEN). The span at 134–148 (SSSTSSPGSSKNPGS) shows a compositional bias: low complexity. The tract at residues 147 to 192 (GSVENMVADLSGENEKLKRENNNLSSELAAAKKQRDELVTFLTGHL) is hydrophobic repeat HR-A/B. Positions 247–252 (RKKRDR) match the Nuclear localization signal motif.

The protein belongs to the HSF family. Class B subfamily. Homotrimer. Exhibits temperature-dependent phosphorylation.

It is found in the nucleus. Functionally, transcriptional regulator that specifically binds DNA sequence 5'-AGAAnnTTCT-3' known as heat shock promoter elements (HSE). In Arabidopsis thaliana (Mouse-ear cress), this protein is Heat stress transcription factor B-1 (HSFB1).